Consider the following 250-residue polypeptide: Phosphoribosylaminoimidazole-succinocarboxamide synthase (250 aa).

The protein belongs to the SAICAR synthetase family.

The catalysed reaction is 5-amino-1-(5-phospho-D-ribosyl)imidazole-4-carboxylate + L-aspartate + ATP = (2S)-2-[5-amino-1-(5-phospho-beta-D-ribosyl)imidazole-4-carboxamido]succinate + ADP + phosphate + 2 H(+). It participates in purine metabolism; IMP biosynthesis via de novo pathway; 5-amino-1-(5-phospho-D-ribosyl)imidazole-4-carboxamide from 5-amino-1-(5-phospho-D-ribosyl)imidazole-4-carboxylate: step 1/2. The protein is Phosphoribosylaminoimidazole-succinocarboxamide synthase of Picosynechococcus sp. (strain ATCC 27264 / PCC 7002 / PR-6) (Agmenellum quadruplicatum).